The primary structure comprises 179 residues: Large ribosomal subunit protein uL5 (179 aa).

This sequence belongs to the universal ribosomal protein uL5 family. As to quaternary structure, part of the 50S ribosomal subunit; part of the 5S rRNA/L5/L18/L25 subcomplex. Contacts the 5S rRNA and the P site tRNA. Forms a bridge to the 30S subunit in the 70S ribosome.

This is one of the proteins that bind and probably mediate the attachment of the 5S RNA into the large ribosomal subunit, where it forms part of the central protuberance. In the 70S ribosome it contacts protein S13 of the 30S subunit (bridge B1b), connecting the 2 subunits; this bridge is implicated in subunit movement. Contacts the P site tRNA; the 5S rRNA and some of its associated proteins might help stabilize positioning of ribosome-bound tRNAs. This is Large ribosomal subunit protein uL5 from Oceanobacillus iheyensis (strain DSM 14371 / CIP 107618 / JCM 11309 / KCTC 3954 / HTE831).